Consider the following 208-residue polypeptide: Protein-L-isoaspartate O-methyltransferase (208 aa).

Residue serine 59 is part of the active site.

The protein belongs to the methyltransferase superfamily. L-isoaspartyl/D-aspartyl protein methyltransferase family.

The protein resides in the cytoplasm. It carries out the reaction [protein]-L-isoaspartate + S-adenosyl-L-methionine = [protein]-L-isoaspartate alpha-methyl ester + S-adenosyl-L-homocysteine. Its function is as follows. Catalyzes the methyl esterification of L-isoaspartyl residues in peptides and proteins that result from spontaneous decomposition of normal L-aspartyl and L-asparaginyl residues. It plays a role in the repair and/or degradation of damaged proteins. In Vibrio vulnificus (strain CMCP6), this protein is Protein-L-isoaspartate O-methyltransferase.